Consider the following 471-residue polypeptide: Trigger factor (471 aa).

In terms of domain architecture, PPIase FKBP-type spans Glu-169–Leu-254. Positions Val-435–Ala-471 are disordered. The segment covering Lys-461 to Ala-471 has biased composition (basic and acidic residues).

Belongs to the FKBP-type PPIase family. Tig subfamily.

The protein resides in the cytoplasm. It carries out the reaction [protein]-peptidylproline (omega=180) = [protein]-peptidylproline (omega=0). Involved in protein export. Acts as a chaperone by maintaining the newly synthesized protein in an open conformation. Functions as a peptidyl-prolyl cis-trans isomerase. The protein is Trigger factor of Brucella abortus (strain S19).